A 156-amino-acid chain; its full sequence is Cyanate hydratase (156 aa).

Catalysis depends on residues Arg96, Glu99, and Ser122.

It belongs to the cyanase family.

It catalyses the reaction cyanate + hydrogencarbonate + 3 H(+) = NH4(+) + 2 CO2. Catalyzes the reaction of cyanate with bicarbonate to produce ammonia and carbon dioxide. The polypeptide is Cyanate hydratase (Pseudomonas putida (strain W619)).